Here is a 206-residue protein sequence, read N- to C-terminus: MARYLGPKLKLSRREGTDLFLKSGVRAIDSKCKIETAPGQHGARRGRLSDYGVQLREKQKVRRMYGVLEKQFRNYYKEAARLKGNTGENLLQLLEQRLDNVVYRMGFASTRAEARQLVSHKAVVVNGQVVNIPSFKVRPEDVVSVREKAKKQARIGAALELAEQREKPVWIEVDNNKLEGAFKRLPERSDLSAEINEQLIVELYSK.

In terms of domain architecture, S4 RNA-binding spans 96 to 157 (QRLDNVVYRM…KAKKQARIGA (62 aa)).

Belongs to the universal ribosomal protein uS4 family. As to quaternary structure, part of the 30S ribosomal subunit. Contacts protein S5. The interaction surface between S4 and S5 is involved in control of translational fidelity.

Its function is as follows. One of the primary rRNA binding proteins, it binds directly to 16S rRNA where it nucleates assembly of the body of the 30S subunit. In terms of biological role, with S5 and S12 plays an important role in translational accuracy. This Idiomarina loihiensis (strain ATCC BAA-735 / DSM 15497 / L2-TR) protein is Small ribosomal subunit protein uS4.